Reading from the N-terminus, the 712-residue chain is Sesterterpene synthase btcA (712 aa).

The interval 1-332 is terpene cyclase; the sequence is MTTIWEHCVD…CANCPRHHAW (332 aa). Asp96 contacts Mg(2+). Substrate-binding positions include Asp96, Asn234, 238-242, and 328-329; these read SWDRE and RH. A DDXXD 1 motif is present at residues 96-100; it reads DDLCD. Positions 234–242 match the NSE/DTE motif; the sequence is NDYWSWDRE. A prenyltransferase region spans residues 333 to 706; sequence RDEESSPSER…VMRIVLSRLS (374 aa). The disordered stretch occupies residues 334–373; sequence DEESSPSERSFSPSNEGIEDPRLSPGASTTSSMSQKSSPA. Low complexity-rich tracts occupy residues 340-349 and 361-373; these read SERSFSPSNE and STTS…SSPA. Positions 414, 417, and 446 each coordinate isopentenyl diphosphate. Mg(2+) contacts are provided by Asp453 and Asp457. Residues 453–457 carry the DDXXD 2 motif; it reads DDIED. Residue Arg462 coordinates dimethylallyl diphosphate. Residue Arg463 coordinates isopentenyl diphosphate. Lys540, Thr541, Gln580, Asn587, Lys597, and Lys607 together coordinate dimethylallyl diphosphate.

This sequence in the N-terminal section; belongs to the terpene synthase family. The protein in the C-terminal section; belongs to the FPP/GGPP synthase family. Hexamer. The cofactor is Mg(2+).

The enzyme catalyses isopentenyl diphosphate + (2E,6E)-farnesyl diphosphate = (2E,6E,10E)-geranylgeranyl diphosphate + diphosphate. It catalyses the reaction isopentenyl diphosphate + (2E,6E,10E)-geranylgeranyl diphosphate = (2E,6E,10E,14E)-geranylfarnesyl diphosphate + diphosphate. It functions in the pathway secondary metabolite biosynthesis; terpenoid biosynthesis. Functionally, bifunctional terpene synthase; part of the gene cluster that mediates the biosynthesis of betaestacins. The bifunctional terpene synthase btcA converts isopentenyl diphosphate (IPP) and dimethylallyl diphosphate (DMAPP) into the sesterterpene betaestacin I. The C-terminal prenyltransferase (PT) domain of btcA catalyzes formation of GFPP, whereas the N-terminal terpene cyclase (TC) domain catalyzes the cyclization of GFPP into betaestacin I. The cytochrome P450 monooxygenase btcB oxidizes the C25 methyl group of betaestacin I to yield the carboxylic acid betaestacin IV via the alcohol betaestacin III. The cytochrome P450 monooxygenase btcC further catalyzes the multistep oxidation of betaestacin IV to produce several compounds, including betaestacins Va, Vb, Vc and VI. This is Sesterterpene synthase btcA from Colletotrichum orbiculare (strain 104-T / ATCC 96160 / CBS 514.97 / LARS 414 / MAFF 240422) (Cucumber anthracnose fungus).